The primary structure comprises 372 residues: MFANSSANTTSTNSSVLQCPDYRDTHRLHMVVYSLVLATGLPLNALALWVFLRVLRVHSVVSVYMCNLAASDLLFTLSLPLRLSYYAQHHWPFPGFLCQTSGAIFQMNMYGSCLFLMLINVDRYAAIVHPLRLRHLRRPRVARRLCLGVWALILLFAVPAARVHSPSHCTYKNITVRLCFESFSDELWKGRLLPLLLLAEILGFLLPLAAVVYSSGRVFWTLARPDATQSQRRRKTVRLLLANLIIFLLCFVPYNSTLAVYGLLRANLVKNSIQDRDQVRGVLMIMVLLAGANCVLDPLVYYFSAEGFRNTLRNLGAPLNTRPLATNGAAGVLTELPSESTQNTGQDATSQVLLQPATLGTPPDNCSQDSAL.

Residues 1–30 (MFANSSANTTSTNSSVLQCPDYRDTHRLHM) are Extracellular-facing. N-linked (GlcNAc...) asparagine glycans are attached at residues N4, N8, and N13. A helical membrane pass occupies residues 31–51 (VVYSLVLATGLPLNALALWVF). Residues 52–59 (LRVLRVHS) are Cytoplasmic-facing. A helical transmembrane segment spans residues 60–80 (VVSVYMCNLAASDLLFTLSLP). Residues 81-100 (LRLSYYAQHHWPFPGFLCQT) are Extracellular-facing. Cysteines 98 and 179 form a disulfide. The chain crosses the membrane as a helical span at residues 101–121 (SGAIFQMNMYGSCLFLMLINV). Over 122 to 140 (DRYAAIVHPLRLRHLRRPR) the chain is Cytoplasmic. A helical membrane pass occupies residues 141–161 (VARRLCLGVWALILLFAVPAA). Topologically, residues 162 to 191 (RVHSPSHCTYKNITVRLCFESFSDELWKGR) are extracellular. N-linked (GlcNAc...) asparagine glycosylation is present at N173. A helical membrane pass occupies residues 192–212 (LLPLLLLAEILGFLLPLAAVV). Residues 213 to 243 (YSSGRVFWTLARPDATQSQRRRKTVRLLLAN) lie on the Cytoplasmic side of the membrane. A helical transmembrane segment spans residues 244–264 (LIIFLLCFVPYNSTLAVYGLL). The Extracellular segment spans residues 265-280 (RANLVKNSIQDRDQVR). A helical membrane pass occupies residues 281 to 301 (GVLMIMVLLAGANCVLDPLVY). Topologically, residues 302–372 (YFSAEGFRNT…PDNCSQDSAL (71 aa)) are cytoplasmic.

Belongs to the G-protein coupled receptor 1 family.

It is found in the cell membrane. Its function is as follows. Receptor for lysophosphatidic acid (LPA), a mediator of diverse cellular activities. This chain is Lysophosphatidic acid receptor 5 (Lpar5), found in Mus musculus (Mouse).